Reading from the N-terminus, the 99-residue chain is Cell division protein FtsB (99 aa).

Residues 1-3 (MKF) are Cytoplasmic-facing. Residues 4–21 (FVIALIVLLGLLQYRLWS) traverse the membrane as a helical segment. Residues 22 to 99 (GSNSLPEYFV…GERSVSSPSQ (78 aa)) lie on the Periplasmic side of the membrane. Residues 36–73 (IAVQQEGNDKLNERNQVLKEEIIDLKSGTEAIEERARN) adopt a coiled-coil conformation.

The protein belongs to the FtsB family. Part of a complex composed of FtsB, FtsL and FtsQ.

The protein localises to the cell inner membrane. Functionally, essential cell division protein. May link together the upstream cell division proteins, which are predominantly cytoplasmic, with the downstream cell division proteins, which are predominantly periplasmic. This Shewanella sp. (strain W3-18-1) protein is Cell division protein FtsB.